A 592-amino-acid polypeptide reads, in one-letter code: Neurogenic locus notch homolog protein (592 aa).

The N-terminal stretch at 1-19 is a signal peptide; that stretch reads MIFVLTLVALCTAIHCPDG. EGF-like domains are found at residues 64–104, 106–146, 267–307, 353–387, 453–488, and 546–588; these read YPSI…DYQV, VPEA…EKCT, YPEA…NTCI, NSQT…PTCE, VPNS…ALCE, and IDGE…KHCN. 15 disulfide bridges follow: Cys68/Cys82, Cys76/Cys92, Cys110/Cys123, Cys117/Cys134, Cys136/Cys145, Cys271/Cys284, Cys278/Cys293, Cys295/Cys306, Cys362/Cys375, Cys377/Cys386, Cys457/Cys471, Cys478/Cys487, Cys550/Cys565, Cys555/Cys576, and Cys578/Cys587. Asn552 is a glycosylation site (N-linked (GlcNAc...) asparagine).

Belongs to the NOTCH family. As to quaternary structure, interacts with EB1.

The protein resides in the cell projection. The protein localises to the cilium. Its subcellular location is the flagellum. It is found in the cytoplasm. It localises to the cytoskeleton. The protein resides in the flagellum axoneme. The chain is Neurogenic locus notch homolog protein from Giardia intestinalis (strain ATCC 50803 / WB clone C6) (Giardia lamblia).